Here is a 236-residue protein sequence, read N- to C-terminus: Orotidine 5'-phosphate decarboxylase (236 aa).

Substrate is bound by residues D14, K36, 63 to 72 (DLKFHDIPNT), T123, R184, Q193, G213, and R214. K65 (proton donor) is an active-site residue.

This sequence belongs to the OMP decarboxylase family. Type 1 subfamily. In terms of assembly, homodimer.

It carries out the reaction orotidine 5'-phosphate + H(+) = UMP + CO2. Its pathway is pyrimidine metabolism; UMP biosynthesis via de novo pathway; UMP from orotate: step 2/2. Catalyzes the decarboxylation of orotidine 5'-monophosphate (OMP) to uridine 5'-monophosphate (UMP). The chain is Orotidine 5'-phosphate decarboxylase from Marinobacter nauticus (strain ATCC 700491 / DSM 11845 / VT8) (Marinobacter aquaeolei).